A 183-amino-acid polypeptide reads, in one-letter code: Large ribosomal subunit protein uL6 (183 aa).

Belongs to the universal ribosomal protein uL6 family. Part of the 50S ribosomal subunit.

This protein binds to the 23S rRNA, and is important in its secondary structure. It is located near the subunit interface in the base of the L7/L12 stalk, and near the tRNA binding site of the peptidyltransferase center. The sequence is that of Large ribosomal subunit protein uL6 from Malacoplasma penetrans (strain HF-2) (Mycoplasma penetrans).